The sequence spans 254 residues: Undecaprenyl-diphosphatase 3 (254 aa).

The next 8 helical transmembrane spans lie at Thr8–Phe28, Ala33–Trp53, Leu74–Ile94, Val97–Val117, Ile133–Phe153, Ala174–Ile194, Leu207–Leu227, and Val233–Ile253.

It belongs to the UppP family.

It localises to the cell membrane. The enzyme catalyses di-trans,octa-cis-undecaprenyl diphosphate + H2O = di-trans,octa-cis-undecaprenyl phosphate + phosphate + H(+). In terms of biological role, catalyzes the dephosphorylation of undecaprenyl diphosphate (UPP). Confers resistance to bacitracin. This is Undecaprenyl-diphosphatase 3 from Bacillus thuringiensis (strain Al Hakam).